We begin with the raw amino-acid sequence, 147 residues long: UPF0179 protein NP_3406A (147 aa).

It belongs to the UPF0179 family.

The protein is UPF0179 protein NP_3406A of Natronomonas pharaonis (strain ATCC 35678 / DSM 2160 / CIP 103997 / JCM 8858 / NBRC 14720 / NCIMB 2260 / Gabara) (Halobacterium pharaonis).